The following is a 615-amino-acid chain: Proteasome-associated ATPase (615 aa).

The disordered stretch occupies residues 1-27 (MSESERSEASEVFGTSPDSRLSSEDAA). Positions 22–99 (SSEDAAELEQ…LREEVDRLGQ (78 aa)) form a coiled coil. Position 302 to 307 (302 to 307 (GCGKTL)) interacts with ATP. The interval 614 to 615 (YL) is docks into pockets in the proteasome alpha-ring.

The protein belongs to the AAA ATPase family. In terms of assembly, homohexamer. Assembles into a hexameric ring structure that caps the 20S proteasome core. Strongly interacts with the prokaryotic ubiquitin-like protein Pup through a hydrophobic interface; the interacting region of ARC lies in its N-terminal coiled-coil domain. There is one Pup binding site per ARC hexamer ring. Upon ATP-binding, the C-terminus of ARC interacts with the alpha-rings of the proteasome core, possibly by binding to the intersubunit pockets.

It participates in protein degradation; proteasomal Pup-dependent pathway. Functionally, ATPase which is responsible for recognizing, binding, unfolding and translocation of pupylated proteins into the bacterial 20S proteasome core particle. May be essential for opening the gate of the 20S proteasome via an interaction with its C-terminus, thereby allowing substrate entry and access to the site of proteolysis. Thus, the C-termini of the proteasomal ATPase may function like a 'key in a lock' to induce gate opening and therefore regulate proteolysis. The sequence is that of Proteasome-associated ATPase from Mycolicibacterium vanbaalenii (strain DSM 7251 / JCM 13017 / BCRC 16820 / KCTC 9966 / NRRL B-24157 / PYR-1) (Mycobacterium vanbaalenii).